The chain runs to 115 residues: Large ribosomal subunit protein bL19 (115 aa).

This sequence belongs to the bacterial ribosomal protein bL19 family.

This protein is located at the 30S-50S ribosomal subunit interface and may play a role in the structure and function of the aminoacyl-tRNA binding site. The chain is Large ribosomal subunit protein bL19 from Lacticaseibacillus casei (strain BL23) (Lactobacillus casei).